The primary structure comprises 180 residues: Crossover junction endodeoxyribonuclease RuvC (180 aa).

Active-site residues include D7, E66, and D138. Mg(2+)-binding residues include D7, E66, and D138.

The protein belongs to the RuvC family. As to quaternary structure, homodimer which binds Holliday junction (HJ) DNA. The HJ becomes 2-fold symmetrical on binding to RuvC with unstacked arms; it has a different conformation from HJ DNA in complex with RuvA. In the full resolvosome a probable DNA-RuvA(4)-RuvB(12)-RuvC(2) complex forms which resolves the HJ. It depends on Mg(2+) as a cofactor.

It localises to the cytoplasm. The catalysed reaction is Endonucleolytic cleavage at a junction such as a reciprocal single-stranded crossover between two homologous DNA duplexes (Holliday junction).. In terms of biological role, the RuvA-RuvB-RuvC complex processes Holliday junction (HJ) DNA during genetic recombination and DNA repair. Endonuclease that resolves HJ intermediates. Cleaves cruciform DNA by making single-stranded nicks across the HJ at symmetrical positions within the homologous arms, yielding a 5'-phosphate and a 3'-hydroxyl group; requires a central core of homology in the junction. The consensus cleavage sequence is 5'-(A/T)TT(C/G)-3'. Cleavage occurs on the 3'-side of the TT dinucleotide at the point of strand exchange. HJ branch migration catalyzed by RuvA-RuvB allows RuvC to scan DNA until it finds its consensus sequence, where it cleaves and resolves the cruciform DNA. This chain is Crossover junction endodeoxyribonuclease RuvC, found in Paraburkholderia phytofirmans (strain DSM 17436 / LMG 22146 / PsJN) (Burkholderia phytofirmans).